Consider the following 366-residue polypeptide: HTH-type transcriptional regulator MSMEG_6044/MSMEI_5883 (366 aa).

The 56-residue stretch at 11–66 (ATLASLAAELKVSRTTISNAYNRPDQLSADLRERIFDAAKRLGYPGPDPVARSLRT) folds into the HTH lacI-type domain. The H-T-H motif DNA-binding region spans 13–32 (LASLAAELKVSRTTISNAYN).

Functionally, transcriptional regulator that negatively regulates transcription of the mce4 operon, which is involved in cholesterol transport and utilization. Acts by binding to the promoter region of the mce4 operon. The sequence is that of HTH-type transcriptional regulator MSMEG_6044/MSMEI_5883 from Mycolicibacterium smegmatis (strain ATCC 700084 / mc(2)155) (Mycobacterium smegmatis).